The following is a 513-amino-acid chain: NADH-quinone oxidoreductase subunit N (513 aa).

Helical transmembrane passes span 20 to 40 (SVGF…LIVV), 49 to 69 (STLL…FIYQ), 88 to 108 (FAIF…VITM), 117 to 137 (ISSM…MMMM), 144 to 164 (LMIF…AGYF), 178 to 198 (LIYG…IYGV), 219 to 239 (FVML…IGAV), 260 to 280 (LSVA…YVAL), 295 to 315 (WFTL…VVAL), 323 to 343 (LLAY…IVMD), 351 to 371 (LFYL…VVLI), 394 to 414 (GAAL…IGFI), 429 to 451 (IFMW…YMLI), and 474 to 494 (LVAQ…GLFF).

Belongs to the complex I subunit 2 family. In terms of assembly, NDH-1 is composed of 14 different subunits. Subunits NuoA, H, J, K, L, M, N constitute the membrane sector of the complex.

It localises to the cell inner membrane. The enzyme catalyses a quinone + NADH + 5 H(+)(in) = a quinol + NAD(+) + 4 H(+)(out). In terms of biological role, NDH-1 shuttles electrons from NADH, via FMN and iron-sulfur (Fe-S) centers, to quinones in the respiratory chain. The immediate electron acceptor for the enzyme in this species is believed to be a menaquinone. Couples the redox reaction to proton translocation (for every two electrons transferred, four hydrogen ions are translocated across the cytoplasmic membrane), and thus conserves the redox energy in a proton gradient. The sequence is that of NADH-quinone oxidoreductase subunit N from Chlorobium chlorochromatii (strain CaD3).